Consider the following 321-residue polypeptide: Methionine import ATP-binding protein MetN (321 aa).

One can recognise an ABC transporter domain in the interval 2 to 241; the sequence is INAVDLHKVY…PGSLLARSLF (240 aa). 38–45 lines the ATP pocket; that stretch reads GPSGAGKS.

Belongs to the ABC transporter superfamily. Methionine importer (TC 3.A.1.24) family. In terms of assembly, the complex is composed of two ATP-binding proteins (MetN), two transmembrane proteins (MetI) and a solute-binding protein (MetQ).

It localises to the cell membrane. It catalyses the reaction L-methionine(out) + ATP + H2O = L-methionine(in) + ADP + phosphate + H(+). The enzyme catalyses D-methionine(out) + ATP + H2O = D-methionine(in) + ADP + phosphate + H(+). Functionally, part of the ABC transporter complex MetNIQ involved in methionine import. Responsible for energy coupling to the transport system. In Thermobifida fusca (strain YX), this protein is Methionine import ATP-binding protein MetN.